Reading from the N-terminus, the 360-residue chain is UPF0324 membrane protein DVU_0123 (360 aa).

10 helical membrane-spanning segments follow: residues 20-42, 57-79, 100-122, 142-164, 171-193, 203-225, 232-254, 278-297, 310-327, and 337-359; these read VTES…FVAP, KDFI…PAVF, SYSL…VFLF, AACL…APAV, MAYS…PLIG, FGAF…FGFS, AGIY…AIMA, FPLF…AGVL, EWAF…TRLS, and FLFG…LLFM.

It belongs to the UPF0324 family.

Its subcellular location is the cell membrane. This Nitratidesulfovibrio vulgaris (strain ATCC 29579 / DSM 644 / CCUG 34227 / NCIMB 8303 / VKM B-1760 / Hildenborough) (Desulfovibrio vulgaris) protein is UPF0324 membrane protein DVU_0123.